Here is a 77-residue protein sequence, read N- to C-terminus: Small ribosomal subunit protein uS17c (77 aa).

Belongs to the universal ribosomal protein uS17 family. As to quaternary structure, part of the 30S ribosomal subunit.

It is found in the plastid. Its subcellular location is the chloroplast. In terms of biological role, one of the primary rRNA binding proteins, it binds specifically to the 5'-end of 16S ribosomal RNA. The protein is Small ribosomal subunit protein uS17c (rps17) of Cyanidium caldarium (Red alga).